The primary structure comprises 396 residues: DNA polymerase IV (396 aa).

The UmuC domain occupies 6–186; sequence IIHVDMDAFY…LPISRLWGVG (181 aa). Positions 10 and 104 each coordinate Mg(2+). Residue glutamate 105 is part of the active site.

The protein belongs to the DNA polymerase type-Y family. Monomer. Requires Mg(2+) as cofactor.

The protein localises to the cytoplasm. It carries out the reaction DNA(n) + a 2'-deoxyribonucleoside 5'-triphosphate = DNA(n+1) + diphosphate. Its function is as follows. Poorly processive, error-prone DNA polymerase involved in untargeted mutagenesis. Copies undamaged DNA at stalled replication forks, which arise in vivo from mismatched or misaligned primer ends. These misaligned primers can be extended by PolIV. Exhibits no 3'-5' exonuclease (proofreading) activity. May be involved in translesional synthesis, in conjunction with the beta clamp from PolIII. The protein is DNA polymerase IV of Desulfatibacillum aliphaticivorans.